The sequence spans 199 residues: Fe/S biogenesis protein NfuA (199 aa).

Cysteine 151 and cysteine 154 together coordinate [4Fe-4S] cluster.

It belongs to the NfuA family. Homodimer. [4Fe-4S] cluster serves as cofactor.

In terms of biological role, involved in iron-sulfur cluster biogenesis. Binds a 4Fe-4S cluster, can transfer this cluster to apoproteins, and thereby intervenes in the maturation of Fe/S proteins. Could also act as a scaffold/chaperone for damaged Fe/S proteins. This is Fe/S biogenesis protein NfuA from Xanthomonas oryzae pv. oryzae (strain PXO99A).